The sequence spans 547 residues: Chaperonin GroEL (547 aa).

ATP-binding positions include 30–33 (TLGP), K51, 87–91 (DGTTT), G415, 479–481 (NAA), and D495.

It belongs to the chaperonin (HSP60) family. Forms a cylinder of 14 subunits composed of two heptameric rings stacked back-to-back. Interacts with the co-chaperonin GroES.

The protein localises to the cytoplasm. The catalysed reaction is ATP + H2O + a folded polypeptide = ADP + phosphate + an unfolded polypeptide.. Its function is as follows. Together with its co-chaperonin GroES, plays an essential role in assisting protein folding. The GroEL-GroES system forms a nano-cage that allows encapsulation of the non-native substrate proteins and provides a physical environment optimized to promote and accelerate protein folding. This Delftia acidovorans (strain DSM 14801 / SPH-1) protein is Chaperonin GroEL.